We begin with the raw amino-acid sequence, 291 residues long: Cytosolic Fe-S cluster assembly factor CFD1 (291 aa).

Position 24-31 (24-31 (GKGGVGKS)) interacts with ATP. The [4Fe-4S] cluster site is built by cysteine 199 and cysteine 202. Residues 270–291 (ENEEEAKETAEEEKSRAATNGQ) form a disordered region. Residues 276-285 (KETAEEEKSR) are compositionally biased toward basic and acidic residues.

This sequence belongs to the Mrp/NBP35 ATP-binding proteins family. NUBP2/CFD1 subfamily. Heterotetramer of 2 NBP35 and 2 CFD1 chains. Requires [4Fe-4S] cluster as cofactor.

The protein resides in the cytoplasm. Functionally, component of the cytosolic iron-sulfur (Fe/S) protein assembly (CIA) machinery. Required for maturation of extramitochondrial Fe-S proteins. The NBP35-CFD1 heterotetramer forms a Fe-S scaffold complex, mediating the de novo assembly of an Fe-S cluster and its transfer to target apoproteins. Required for biogenesis and export of both ribosomal subunits, which may reflect a role in assembly of the Fe/S clusters in RLI1, a protein which performs rRNA processing and ribosome export. This Yarrowia lipolytica (strain CLIB 122 / E 150) (Yeast) protein is Cytosolic Fe-S cluster assembly factor CFD1.